We begin with the raw amino-acid sequence, 244 residues long: Ribosomal RNA small subunit methyltransferase G (244 aa).

S-adenosyl-L-methionine-binding positions include glycine 79, phenylalanine 84, 102-104, 130-131, and arginine 149; these read DST and AE. Positions 225-244 are disordered; that stretch reads DRYPRREGVPNQQPLFWSAK. Over residues 234–244 the composition is skewed to polar residues; it reads PNQQPLFWSAK.

It belongs to the methyltransferase superfamily. RNA methyltransferase RsmG family.

It localises to the cytoplasm. Specifically methylates the N7 position of a guanine in 16S rRNA. The polypeptide is Ribosomal RNA small subunit methyltransferase G (Deinococcus deserti (strain DSM 17065 / CIP 109153 / LMG 22923 / VCD115)).